Here is a 247-residue protein sequence, read N- to C-terminus: MMIPKGEVVELGKRGNFRDILKELSATGFTGYLEVSYKKGELSRAKVLFSNGKIVAAGIKRVISKSEIVGEKALEELLGLESCVVDVYALDEGKVAKALEWNRNAVVEHLPETEVEVEGGLTEEIITTPDEREAILKKYGIKMPSEEEIDQIIMNALDGSYDVIAATTSAPGDFESLKNSLISTAELYLGKMSKKVVDVINDCKSAEELVERFDEIRSAAKSLVIFIPRKKIDEMLSEMERLIGESI.

This is an uncharacterized protein from Archaeoglobus fulgidus (strain ATCC 49558 / DSM 4304 / JCM 9628 / NBRC 100126 / VC-16).